We begin with the raw amino-acid sequence, 274 residues long: Dermonecrotic toxin LcsSicTox-betaIC1 (274 aa).

H5 is a catalytic residue. Mg(2+) contacts are provided by E25 and D27. Residue H41 is the Nucleophile of the active site. Intrachain disulfides connect C45–C51 and C47–C190. N66 carries an N-linked (GlcNAc...) asparagine glycan. Residue D85 participates in Mg(2+) binding.

It belongs to the arthropod phospholipase D family. Class II subfamily. It depends on Mg(2+) as a cofactor. In terms of tissue distribution, expressed by the venom gland.

It localises to the secreted. It catalyses the reaction an N-(acyl)-sphingosylphosphocholine = an N-(acyl)-sphingosyl-1,3-cyclic phosphate + choline. The enzyme catalyses an N-(acyl)-sphingosylphosphoethanolamine = an N-(acyl)-sphingosyl-1,3-cyclic phosphate + ethanolamine. The catalysed reaction is a 1-acyl-sn-glycero-3-phosphocholine = a 1-acyl-sn-glycero-2,3-cyclic phosphate + choline. It carries out the reaction a 1-acyl-sn-glycero-3-phosphoethanolamine = a 1-acyl-sn-glycero-2,3-cyclic phosphate + ethanolamine. In terms of biological role, dermonecrotic toxins cleave the phosphodiester linkage between the phosphate and headgroup of certain phospholipids (sphingolipid and lysolipid substrates), forming an alcohol (often choline) and a cyclic phosphate. This toxin acts on sphingomyelin (SM). It may also act on ceramide phosphoethanolamine (CPE), lysophosphatidylcholine (LPC) and lysophosphatidylethanolamine (LPE), but not on lysophosphatidylserine (LPS), and lysophosphatidylglycerol (LPG). It acts by transphosphatidylation, releasing exclusively cyclic phosphate products as second products. Induces dermonecrosis, hemolysis, increased vascular permeability, edema, inflammatory response, and platelet aggregation. This is Dermonecrotic toxin LcsSicTox-betaIC1 from Loxosceles cf. spinulosa (strain GJB-2008) (Recluse spider).